The following is a 230-amino-acid chain: DNA ADP-ribosyl transferase (230 aa).

Residues 26–230 (WIVWHFTHAD…KYVIKPGMYY (205 aa)) enclose the DarT domain. Residues 30–32 (HFT), G39, L47, and R67 contribute to the NAD(+) site. R67 (proton acceptor) is an active-site residue. E183 is an active-site residue.

Belongs to the DarT ADP-ribosyltransferase family. As to quaternary structure, interacts with cognate antitoxin DarG (via C-terminus); this heterodimeric complex neutralizes the toxic effect of DarT by preventing ssDNA binding to DarT and consequently inactivating the toxin by direct protein-protein interactions.

It carries out the reaction a thymidine in DNA + NAD(+) = an N-(ADP-alpha-D-ribosyl)-thymidine in DNA + nicotinamide + H(+). Toxic component of the hybrid type II/IV toxin-antitoxin (TA) system DarTG, which plays a crucial role in controlling bacterial growth and bacteriophage infection. ADP-ribosylates ssDNA, preferentially in the motif TTTW. In case of phage infection, DarT toxin ADP-ribosylates DNA, which inhibits both viral DNA and RNA synthesis and leads to abortive infection. Its toxic effect is neutralized by cognate antitoxin DarG. The chain is DNA ADP-ribosyl transferase from Mycobacterium bovis (strain BCG / Pasteur 1173P2).